Here is a 345-residue protein sequence, read N- to C-terminus: 3-hydroxy-5-methyl-1-naphthoate 3-O-methyltransferase (345 aa).

Position 205 (aspartate 205) interacts with S-adenosyl-L-methionine. The Proton acceptor role is filled by histidine 252.

The protein belongs to the class I-like SAM-binding methyltransferase superfamily. Cation-independent O-methyltransferase family.

It catalyses the reaction 3-hydroxy-5-methyl-1-naphthoate + S-adenosyl-L-methionine = 3-methoxy-5-methyl-1-naphthoate + S-adenosyl-L-homocysteine + H(+). It participates in antibiotic biosynthesis. Inhibited by different divalent cations, such as Mg(2+), Mn(2+), Fe(2+), Cu(2+) and Zn(2+). Functionally, O-methyltransferase that mediates the formation of 3-methoxy-5-methyl-1-naphthoate from 3-hydroxy-5-methyl-1-naphthoate in the biosynthesis of the antitumor antibiotic azinomycin B. In Streptomyces sahachiroi, this protein is 3-hydroxy-5-methyl-1-naphthoate 3-O-methyltransferase.